The sequence spans 186 residues: MKLLLLCLGLILVCAHEEENVVRSNIDISKISGEWYSILLASDVKEKIEENGSMRVFVEHIKALDNSSLSFVFHTKENGKCTEIFLVADKTKDGVYTVVYDGYNVFSIVETVYDEYILLHLLNFDKTRPFQLVEFYAREPDVSQKLKEKFVKYCQEHGIVNILDLTEVDRCLQARGSEVAQDSSVE.

The first 15 residues, 1–15, serve as a signal peptide directing secretion; the sequence is MKLLLLCLGLILVCA. N-linked (GlcNAc...) asparagine glycans are attached at residues N51 and N66. C81 and C171 form a disulfide bridge.

Belongs to the calycin superfamily. Lipocalin family. As to expression, abundant in urine (at protein level).

The protein localises to the secreted. May be a pheromone carrier. Acts as a kairomone, detected by the prey vomeronasal organ and inducing fear reactions in mice. The polypeptide is Allergen Fel d 4 (Felis catus (Cat)).